The primary structure comprises 812 residues: DNA replication licensing factor MCM3 (812 aa).

Alanine 2 bears the N-acetylalanine mark. Serine 160 carries the post-translational modification Phosphoserine. Lysine 293 carries the N6-acetyllysine modification. The region spanning 295-502 (VFEQLARSLA…QDREISDHVL (208 aa)) is the MCM domain. Positions 353, 393, 394, 395, and 397 each coordinate ADP. Residues 477–480 (SRFD) carry the Arginine finger motif. The residue at position 547 (lysine 547) is an N6-acetyllysine. Serine 611 carries the phosphoserine modification. An ATP-binding site is contributed by arginine 664. The disordered stretch occupies residues 664-744 (RKKASEDESD…TQDSQKVELS (81 aa)). Residues serine 668, serine 672, and serine 681 each carry the phosphoserine modification. The span at 670 to 681 (DESDLEDEEEKS) shows a compositional bias: acidic residues. A Phosphotyrosine modification is found at tyrosine 705. Serine 708 is modified (phosphoserine). Residues threonine 719, threonine 722, and threonine 729 each carry the phosphothreonine modification. The span at 720–744 (PKTDDSQEKTDDSQETQDSQKVELS) shows a compositional bias: basic and acidic residues. Phosphoserine is present on residues serine 732 and serine 738.

This sequence belongs to the MCM family. Component of the MCM2-7 complex. The complex forms a toroidal hexameric ring with the proposed subunit order MCM2-MCM6-MCM4-MCM7-MCM3-MCM5. Component of the CMG helicase complex, a hexameric ring of related MCM2-7 subunits stabilized by CDC45 and the tetrameric GINS complex. Associated with the replication-specific DNA polymerase alpha. Interacts with MCMBP. Interacts with ANKRD17. Interacts with MCM3AP; this interaction leads to MCM3 acetylation. In terms of processing, acetylated by MCM3AP. O-glycosylated (O-GlcNAcylated), in a cell cycle-dependent manner.

It is found in the nucleus. The protein localises to the chromosome. It carries out the reaction ATP + H2O = ADP + phosphate + H(+). Acts as a component of the MCM2-7 complex (MCM complex) which is the replicative helicase essential for 'once per cell cycle' DNA replication initiation and elongation in eukaryotic cells. Core component of CDC45-MCM-GINS (CMG) helicase, the molecular machine that unwinds template DNA during replication, and around which the replisome is built. The active ATPase sites in the MCM2-7 ring are formed through the interaction surfaces of two neighboring subunits such that a critical structure of a conserved arginine finger motif is provided in trans relative to the ATP-binding site of the Walker A box of the adjacent subunit. The six ATPase active sites, however, are likely to contribute differentially to the complex helicase activity. Required for the entry in S phase and for cell division. The protein is DNA replication licensing factor MCM3 (Mcm3) of Mus musculus (Mouse).